The primary structure comprises 414 residues: Seminal vesicle secretory protein 2 (414 aa).

An N-terminal signal peptide occupies residues 1–22 (MKSSVFILSLFLLLERQAAVVG). Gln-23 is modified (pyrrolidone carboxylic acid). Tandem repeats lie at residues 108–120 (ESQIKSFRQVKSS), 127–139 (GSQLKSFGQVKSS), 140–152 (ESQLKSFGQVKAS), 153–165 (GSQLKSFGQVKAS), 166–178 (GSQLKSYGQMKSS), 179–191 (GSQVKSFGQMKSS), 192–204 (GSQVKSFGQMKAS), 205–217 (ESQIKSFGQRKSQ), 224–236 (YGQMKSYGQTKSL), 237–249 (ESQAKSFGQVKSQ), 257–269 (YGQRKSYGEETQL), 275–287 (DAQLKSYGQQKSQ), and 299–311 (SAQLKSFGQQKSL). A 13 X 13 AA tandem repeats region spans residues 108 to 311 (ESQIKSFRQV…LKSFGQQKSL (204 aa)). 3 disordered regions span residues 170 to 228 (KSYG…GQMK), 240 to 294 (AKSF…SFSQ), and 306 to 369 (GQQK…FGQE). Positions 240-259 (AKSFGQVKSQSGQMKSSYGQ) are enriched in polar residues. The span at 277-294 (QLKSYGQQKSQKQSSFSQ) shows a compositional bias: low complexity. 2 stretches are compositionally biased toward polar residues: residues 306–321 (GQQKSLKGFSQQTQQK) and 342–351 (SVQQKSTQQM). A compositionally biased stretch (low complexity) spans 358-369 (SQFGQQRQFGQE).

The repeating unit appears to be involved in the formation of the copulatory plug via a transglutaminase reaction cross-linking glutamine and lysine residues.

The rat seminal vesicle contains six major androgen-dependent secretory proteins referred to as SVS I-VI. The SVS I-III proteins appear to be components of the rat copulatory plug, with the SVS II protein being the major component. In Rattus norvegicus (Rat), this protein is Seminal vesicle secretory protein 2 (Svs2).